Reading from the N-terminus, the 196-residue chain is Imidazoleglycerol-phosphate dehydratase (196 aa).

It belongs to the imidazoleglycerol-phosphate dehydratase family.

Its subcellular location is the cytoplasm. It carries out the reaction D-erythro-1-(imidazol-4-yl)glycerol 3-phosphate = 3-(imidazol-4-yl)-2-oxopropyl phosphate + H2O. It functions in the pathway amino-acid biosynthesis; L-histidine biosynthesis; L-histidine from 5-phospho-alpha-D-ribose 1-diphosphate: step 6/9. This Caulobacter vibrioides (strain ATCC 19089 / CIP 103742 / CB 15) (Caulobacter crescentus) protein is Imidazoleglycerol-phosphate dehydratase.